The primary structure comprises 316 residues: Porphobilinogen deaminase (316 aa).

Cys245 carries the post-translational modification S-(dipyrrolylmethanemethyl)cysteine.

This sequence belongs to the HMBS family. In terms of assembly, monomer. Dipyrromethane is required as a cofactor.

It carries out the reaction 4 porphobilinogen + H2O = hydroxymethylbilane + 4 NH4(+). The protein operates within porphyrin-containing compound metabolism; protoporphyrin-IX biosynthesis; coproporphyrinogen-III from 5-aminolevulinate: step 2/4. Its pathway is porphyrin-containing compound metabolism; chlorophyll biosynthesis. In terms of biological role, tetrapolymerization of the monopyrrole PBG into the hydroxymethylbilane pre-uroporphyrinogen in several discrete steps. This Synechococcus sp. (strain CC9311) protein is Porphobilinogen deaminase.